The sequence spans 568 residues: Urease subunit alpha (568 aa).

The Ni(2+) site is built by H134, H136, and K217. The residue at position 217 (K217) is an N6-carboxylysine. H219 contributes to the substrate binding site. Ni(2+) is bound by residues H246 and H272. H320 acts as the Proton donor in catalysis. D360 is a Ni(2+) binding site.

The protein belongs to the metallo-dependent hydrolases superfamily. Urease alpha subunit family. As to quaternary structure, heterotrimer of UreA (gamma), UreB (beta) and UreC (alpha) subunits. Three heterotrimers associate to form the active enzyme. It depends on Ni cation as a cofactor. Carboxylation allows a single lysine to coordinate two nickel ions.

It localises to the cytoplasm. It carries out the reaction urea + 2 H2O + H(+) = hydrogencarbonate + 2 NH4(+). It functions in the pathway nitrogen metabolism; urea degradation; CO(2) and NH(3) from urea (urease route): step 1/1. The polypeptide is Urease subunit alpha (Marinomonas sp. (strain MWYL1)).